A 309-amino-acid polypeptide reads, in one-letter code: Voltage-dependent anion channel-forming protein mll4386 (309 aa).

3 helical membrane passes run 32–52, 58–78, and 227–247; these read ILPQIFGFAVYSAVILALARW, GVFNITPFGLVGVTLSIYLSF, and IVCLLLPIGLISTTGWATPLF.

It belongs to the anion channel-forming bestrophin (TC 1.A.46) family.

It is found in the cell membrane. The chain is Voltage-dependent anion channel-forming protein mll4386 from Mesorhizobium japonicum (strain LMG 29417 / CECT 9101 / MAFF 303099) (Mesorhizobium loti (strain MAFF 303099)).